Consider the following 65-residue polypeptide: Toxin KTx8 (65 aa).

The first 25 residues, 1–25, serve as a signal peptide directing secretion; it reads MNKVCFVVVLVLFVALAAYVSPIEG. Cystine bridges form between cysteine 31-cysteine 53, cysteine 38-cysteine 61, and cysteine 42-cysteine 63.

It belongs to the short scorpion toxin superfamily. Potassium channel inhibitor family. Alpha-KTx 11 subfamily. As to expression, expressed by the venom gland.

It is found in the secreted. This recombinant toxin inhibits the mammalian voltage-gated potassium channels Kv1.3/KCNA3 in vitro with an IC(50) of 26.40 nM. This Lychas mucronatus (Chinese swimming scorpion) protein is Toxin KTx8.